Consider the following 251-residue polypeptide: Probable metal-binding protein YrpE (251 aa).

The signal sequence occupies residues 1-30; that stretch reads MNILFSKRLGILTIGSLLVLAGCQTSGSSA. Polar residues predominate over residues 25–41; it reads TSGSSAGESNQTTSSSA. A disordered region spans residues 25-72; sequence TSGSSAGESNQTTSSSAVEEDSSKTQEQTSDSHTHEHSHDHSHAHDEE. Residues 54–72 are compositionally biased toward basic and acidic residues; it reads SDSHTHEHSHDHSHAHDEE. Zn(2+) is bound by residues H203, H212, H214, E247, and H251.

It belongs to the calycin superfamily. ZinT family.

The chain is Probable metal-binding protein YrpE (yrpE) from Bacillus subtilis (strain 168).